The following is a 191-amino-acid chain: Cell division protein SepF (191 aa).

A compositionally biased stretch (polar residues) spans 153 to 178 (FPEEVSPSNISSKKTSPYSLETNTTP). Positions 153 to 191 (FPEEVSPSNISSKKTSPYSLETNTTPEPAWGESKLSAFS) are disordered.

This sequence belongs to the SepF family. In terms of assembly, homodimer. Interacts with FtsZ.

It is found in the cytoplasm. Functionally, cell division protein that is part of the divisome complex and is recruited early to the Z-ring. Probably stimulates Z-ring formation, perhaps through the cross-linking of FtsZ protofilaments. Its function overlaps with FtsA. The sequence is that of Cell division protein SepF from Prochlorococcus marinus (strain MIT 9515).